The following is a 138-amino-acid chain: SPbeta prophage-derived uncharacterized protein YopJ (138 aa).

This chain is SPbeta prophage-derived uncharacterized protein YopJ (yopJ), found in Bacillus subtilis (strain 168).